The primary structure comprises 363 residues: 3-isopropylmalate dehydrogenase (363 aa).

NAD(+) is bound at residue 79–92; that stretch reads GPKWEHLPPNDQPE. The substrate site is built by R100, R110, R139, and D228. Mg(2+) contacts are provided by D228, D252, and D256. 286–298 is a binding site for NAD(+); sequence GSAPDIAGKNIAN.

It belongs to the isocitrate and isopropylmalate dehydrogenases family. LeuB type 1 subfamily. As to quaternary structure, homodimer. It depends on Mg(2+) as a cofactor. Requires Mn(2+) as cofactor.

It localises to the cytoplasm. It catalyses the reaction (2R,3S)-3-isopropylmalate + NAD(+) = 4-methyl-2-oxopentanoate + CO2 + NADH. It functions in the pathway amino-acid biosynthesis; L-leucine biosynthesis; L-leucine from 3-methyl-2-oxobutanoate: step 3/4. Its function is as follows. Catalyzes the oxidation of 3-carboxy-2-hydroxy-4-methylpentanoate (3-isopropylmalate) to 3-carboxy-4-methyl-2-oxopentanoate. The product decarboxylates to 4-methyl-2 oxopentanoate. In Vibrio vulnificus (strain CMCP6), this protein is 3-isopropylmalate dehydrogenase.